The following is a 1223-amino-acid chain: DNA-directed RNA polymerase subunit beta'' (1223 aa).

Zn(2+)-binding residues include Cys233, Cys307, Cys314, and Cys317.

This sequence belongs to the RNA polymerase beta' chain family. RpoC2 subfamily. In terms of assembly, in plastids the minimal PEP RNA polymerase catalytic core is composed of four subunits: alpha, beta, beta', and beta''. When a (nuclear-encoded) sigma factor is associated with the core the holoenzyme is formed, which can initiate transcription. Zn(2+) is required as a cofactor.

The protein localises to the plastid. It localises to the chloroplast. The catalysed reaction is RNA(n) + a ribonucleoside 5'-triphosphate = RNA(n+1) + diphosphate. In terms of biological role, DNA-dependent RNA polymerase catalyzes the transcription of DNA into RNA using the four ribonucleoside triphosphates as substrates. This chain is DNA-directed RNA polymerase subunit beta'', found in Mesostigma viride (Green alga).